The following is a 512-amino-acid chain: Chlorogenic acid esterase (512 aa).

The first 18 residues, 1–18 (MLLRLCIIATLLVSHCVA), serve as a signal peptide directing secretion. N-linked (GlcNAc...) asparagine glycans are attached at residues asparagine 47, asparagine 80, and asparagine 98. A disulfide bond links cysteine 92 and cysteine 120. Serine 230 acts as the Acyl-ester intermediate in catalysis. Residue asparagine 271 is glycosylated (N-linked (GlcNAc...) asparagine). Cysteine 281 and cysteine 292 are disulfide-bonded. N-linked (GlcNAc...) asparagine glycosylation is found at asparagine 295, asparagine 322, and asparagine 328. The active-site Charge relay system is glutamate 351. N-linked (GlcNAc...) asparagine glycosylation is found at asparagine 391 and asparagine 402. Histidine 416 (charge relay system) is an active-site residue. N-linked (GlcNAc...) asparagine glycosylation is present at asparagine 474.

The protein belongs to the type-B carboxylesterase/lipase family.

The protein localises to the secreted. It carries out the reaction chlorogenate + H2O = L-quinate + (E)-caffeate + H(+). Functionally, extracellular chlorogenic acid esterase that releases caffeic acid from chlorogenic acid (CGA) contained in natural substrates such as apple marc and coffee pulp. Shows no activity towards 5-O-p-coumaroyl quinic acid, another quinic ester derivative, and rosmarinic acid, another caffeic ester derivative. This Aspergillus niger protein is Chlorogenic acid esterase.